A 256-amino-acid polypeptide reads, in one-letter code: ATP synthase subunit a (256 aa).

A propeptide spans 1–8 (removed in mature form); it reads MYQFNFIL. 7 consecutive transmembrane segments (helical) span residues 34–54, 92–112, 121–141, 148–168, 186–206, 209–229, and 230–250; these read ITNI…YHLL, YFPF…IGMV, HFIL…FLGL, FFSL…LVLI, ANIL…YNIM, GILF…FSGL, and ELAI…SYIK.

It belongs to the ATPase A chain family. In terms of assembly, F-type ATPases have 2 components, CF(1) - the catalytic core - and CF(0) - the membrane proton channel. CF(1) has five subunits: alpha(3), beta(3), gamma(1), delta(1), epsilon(1). CF(0) has three main subunits: a, b and c.

It localises to the mitochondrion inner membrane. Mitochondrial membrane ATP synthase (F(1)F(0) ATP synthase or Complex V) produces ATP from ADP in the presence of a proton gradient across the membrane which is generated by electron transport complexes of the respiratory chain. F-type ATPases consist of two structural domains, F(1) - containing the extramembraneous catalytic core and F(0) - containing the membrane proton channel, linked together by a central stalk and a peripheral stalk. During catalysis, ATP synthesis in the catalytic domain of F(1) is coupled via a rotary mechanism of the central stalk subunits to proton translocation. Key component of the proton channel; it may play a direct role in the translocation of protons across the membrane. The sequence is that of ATP synthase subunit a (atp6) from Emericella nidulans (Aspergillus nidulans).